A 408-amino-acid chain; its full sequence is LL-diaminopimelate aminotransferase (408 aa).

Tyrosine 15 and glycine 42 together coordinate substrate. Residues tyrosine 72, 108 to 109 (SK), tyrosine 132, asparagine 187, tyrosine 218, and 246 to 248 (SFS) contribute to the pyridoxal 5'-phosphate site. Substrate is bound by residues lysine 109, tyrosine 132, and asparagine 187. N6-(pyridoxal phosphate)lysine is present on lysine 249. Pyridoxal 5'-phosphate-binding residues include arginine 257 and asparagine 292. Substrate contacts are provided by asparagine 292 and arginine 388.

It belongs to the class-I pyridoxal-phosphate-dependent aminotransferase family. LL-diaminopimelate aminotransferase subfamily. In terms of assembly, homodimer. Pyridoxal 5'-phosphate is required as a cofactor.

The catalysed reaction is (2S,6S)-2,6-diaminopimelate + 2-oxoglutarate = (S)-2,3,4,5-tetrahydrodipicolinate + L-glutamate + H2O + H(+). The protein operates within amino-acid biosynthesis; L-lysine biosynthesis via DAP pathway; LL-2,6-diaminopimelate from (S)-tetrahydrodipicolinate (aminotransferase route): step 1/1. Its function is as follows. Involved in the synthesis of meso-diaminopimelate (m-DAP or DL-DAP), required for both lysine and peptidoglycan biosynthesis. Catalyzes the direct conversion of tetrahydrodipicolinate to LL-diaminopimelate. This Synechococcus sp. (strain CC9311) protein is LL-diaminopimelate aminotransferase.